We begin with the raw amino-acid sequence, 416 residues long: Glutamyl-tRNA reductase (416 aa).

Substrate-binding positions include 49–52, Ser105, 110–112, and Gln116; these read TCNR and EPQ. The Nucleophile role is filled by Cys50. 185–190 serves as a coordination point for NADP(+); sequence GAGETI.

This sequence belongs to the glutamyl-tRNA reductase family. In terms of assembly, homodimer.

The catalysed reaction is (S)-4-amino-5-oxopentanoate + tRNA(Glu) + NADP(+) = L-glutamyl-tRNA(Glu) + NADPH + H(+). The protein operates within porphyrin-containing compound metabolism; protoporphyrin-IX biosynthesis; 5-aminolevulinate from L-glutamyl-tRNA(Glu): step 1/2. Catalyzes the NADPH-dependent reduction of glutamyl-tRNA(Glu) to glutamate 1-semialdehyde (GSA). This is Glutamyl-tRNA reductase from Shewanella loihica (strain ATCC BAA-1088 / PV-4).